Reading from the N-terminus, the 569-residue chain is Toxin YxiD (569 aa).

The 235-residue stretch at 1–235 (MKTLDVHALH…NPQMKQADDS (235 aa)) folds into the LXG domain. Residues 8–91 (ALHEGIQHTI…QHAISSVESN (84 aa)) are a coiled coil. Residues 548 to 569 (HQAGIHGTGSPANELFKGGKKK) form a disordered region.

In the N-terminal section; belongs to the LXG family. In terms of assembly, probably interacts with cognate immunity protein YxxD but not with non-cognate immunity proteins. The interaction inhibits the toxic activity of YxxD.

The protein localises to the secreted. In terms of biological role, toxic component of one of 6 LXG toxin-immunity modules in this strain. They promote kin selection, mediate competition in biofilms, and drive spatial segregation of different strains, indicating that LXG toxins may help avoid warfare between strains in biofilms. Mediates intercellular competition during biofilm formation; disruption of the operon disadvantages the bacteria, but overexpression of the cognate immunity protein restores growth in competition with wild-type. Overexpression alone in situ causes growth arrest but not cell lysis, a large decrease in chromosomal DNA content and the production of anucleate cells. No effect is seen on rRNA. Co-overexpression with cognate immunity protein YxxD does not cause growth arrest. The toxic effect is not dependent on the epsA and tapA operons which are required for biofilm formation. In Bacillus subtilis (strain 168), this protein is Toxin YxiD (yxiD).